The primary structure comprises 75 residues: ATP synthase subunit c (75 aa).

2 helical membrane passes run 8–28 and 54–74; these read FIAIGLSVLGILGAGLGVANI and AGMVEFTGLLAFVLAMLLMFV.

It belongs to the ATPase C chain family. F-type ATPases have 2 components, F(1) - the catalytic core - and F(0) - the membrane proton channel. F(1) has five subunits: alpha(3), beta(3), gamma(1), delta(1), epsilon(1). F(0) has three main subunits: a(1), b(2) and c(10-14). The alpha and beta chains form an alternating ring which encloses part of the gamma chain. F(1) is attached to F(0) by a central stalk formed by the gamma and epsilon chains, while a peripheral stalk is formed by the delta and b chains.

The protein localises to the cell membrane. In terms of biological role, f(1)F(0) ATP synthase produces ATP from ADP in the presence of a proton or sodium gradient. F-type ATPases consist of two structural domains, F(1) containing the extramembraneous catalytic core and F(0) containing the membrane proton channel, linked together by a central stalk and a peripheral stalk. During catalysis, ATP synthesis in the catalytic domain of F(1) is coupled via a rotary mechanism of the central stalk subunits to proton translocation. Functionally, key component of the F(0) channel; it plays a direct role in translocation across the membrane. A homomeric c-ring of between 10-14 subunits forms the central stalk rotor element with the F(1) delta and epsilon subunits. This chain is ATP synthase subunit c, found in Wolbachia sp. subsp. Brugia malayi (strain TRS).